The chain runs to 133 residues: Large ribosomal subunit protein bL20 (133 aa).

Belongs to the bacterial ribosomal protein bL20 family.

Functionally, binds directly to 23S ribosomal RNA and is necessary for the in vitro assembly process of the 50S ribosomal subunit. It is not involved in the protein synthesizing functions of that subunit. This chain is Large ribosomal subunit protein bL20, found in Bartonella tribocorum (strain CIP 105476 / IBS 506).